The sequence spans 315 residues: Ankyrin repeat domain-containing protein SOWAHD (315 aa).

The disordered stretch occupies residues 1–39; it reads MAQLGGAANRAPTASLAPTSQSLRCAPQPRPSRADTGSL. 3 ANK repeats span residues 112-141, 147-162, and 186-216; these read PREH…ELLL, TGYS…GRHE, and GGLT…DATR.

The protein belongs to the SOWAH family.

The sequence is that of Ankyrin repeat domain-containing protein SOWAHD (SOWAHD) from Homo sapiens (Human).